Consider the following 361-residue polypeptide: Phosphoserine aminotransferase (361 aa).

R42 is a binding site for L-glutamate. Pyridoxal 5'-phosphate-binding positions include A76 to T77, W102, T152, D172, and Q195. N6-(pyridoxal phosphate)lysine is present on K196. Pyridoxal 5'-phosphate is bound at residue N237–T238.

This sequence belongs to the class-V pyridoxal-phosphate-dependent aminotransferase family. SerC subfamily. As to quaternary structure, homodimer. Requires pyridoxal 5'-phosphate as cofactor.

The protein localises to the cytoplasm. The catalysed reaction is O-phospho-L-serine + 2-oxoglutarate = 3-phosphooxypyruvate + L-glutamate. It catalyses the reaction 4-(phosphooxy)-L-threonine + 2-oxoglutarate = (R)-3-hydroxy-2-oxo-4-phosphooxybutanoate + L-glutamate. The protein operates within amino-acid biosynthesis; L-serine biosynthesis; L-serine from 3-phospho-D-glycerate: step 2/3. Its pathway is cofactor biosynthesis; pyridoxine 5'-phosphate biosynthesis; pyridoxine 5'-phosphate from D-erythrose 4-phosphate: step 3/5. Catalyzes the reversible conversion of 3-phosphohydroxypyruvate to phosphoserine and of 3-hydroxy-2-oxo-4-phosphonooxybutanoate to phosphohydroxythreonine. This Xanthomonas oryzae pv. oryzae (strain MAFF 311018) protein is Phosphoserine aminotransferase.